A 194-amino-acid polypeptide reads, in one-letter code: ATP-dependent Clp protease proteolytic subunit (194 aa).

Catalysis depends on serine 98, which acts as the Nucleophile. Histidine 123 is a catalytic residue.

The protein belongs to the peptidase S14 family. Fourteen ClpP subunits assemble into 2 heptameric rings which stack back to back to give a disk-like structure with a central cavity, resembling the structure of eukaryotic proteasomes.

The protein localises to the cytoplasm. It catalyses the reaction Hydrolysis of proteins to small peptides in the presence of ATP and magnesium. alpha-casein is the usual test substrate. In the absence of ATP, only oligopeptides shorter than five residues are hydrolyzed (such as succinyl-Leu-Tyr-|-NHMec, and Leu-Tyr-Leu-|-Tyr-Trp, in which cleavage of the -Tyr-|-Leu- and -Tyr-|-Trp bonds also occurs).. Its function is as follows. Cleaves peptides in various proteins in a process that requires ATP hydrolysis. Has a chymotrypsin-like activity. Plays a major role in the degradation of misfolded proteins. The chain is ATP-dependent Clp protease proteolytic subunit from Syntrophotalea carbinolica (strain DSM 2380 / NBRC 103641 / GraBd1) (Pelobacter carbinolicus).